Here is a 651-residue protein sequence, read N- to C-terminus: Beta-glucuronidase (651 aa).

An N-terminal signal peptide occupies residues 1–22 (MARGSAVAWAALGPLLWGCALG). N-linked (GlcNAc...) asparagine glycosylation is found at N173, N272, and N420. E451 functions as the Proton donor in the catalytic mechanism. N-linked (GlcNAc...) asparagine glycosylation occurs at N631.

This sequence belongs to the glycosyl hydrolase 2 family. Homotetramer. Post-translationally, N-linked glycosylated with 3 to 4 oligosaccharide chains.

The protein resides in the lysosome. The catalysed reaction is a beta-D-glucuronoside + H2O = D-glucuronate + an alcohol. With respect to regulation, inhibited by L-aspartic acid. In terms of biological role, plays an important role in the degradation of dermatan and keratan sulfates. The chain is Beta-glucuronidase (GUSB) from Homo sapiens (Human).